The primary structure comprises 93 residues: Small ribosomal subunit protein uS19 (93 aa).

The protein belongs to the universal ribosomal protein uS19 family.

Functionally, protein S19 forms a complex with S13 that binds strongly to the 16S ribosomal RNA. The sequence is that of Small ribosomal subunit protein uS19 from Leptospira interrogans serogroup Icterohaemorrhagiae serovar copenhageni (strain Fiocruz L1-130).